Here is a 113-residue protein sequence, read N- to C-terminus: Large ribosomal subunit protein bL17 (113 aa).

The protein belongs to the bacterial ribosomal protein bL17 family. In terms of assembly, part of the 50S ribosomal subunit. Contacts protein L32.

In Clostridium novyi (strain NT), this protein is Large ribosomal subunit protein bL17.